Consider the following 228-residue polypeptide: Ion-translocating oxidoreductase complex subunit E (228 aa).

5 helical membrane passes run Ala-18–Ala-38, Ile-69–Ala-89, Phe-92–Val-112, Leu-125–Leu-145, and Pro-182–Val-202.

This sequence belongs to the NqrDE/RnfAE family. In terms of assembly, the complex is composed of six subunits: RnfA, RnfB, RnfC, RnfD, RnfE and RnfG.

The protein resides in the cell inner membrane. Part of a membrane-bound complex that couples electron transfer with translocation of ions across the membrane. In Cronobacter sakazakii (strain ATCC BAA-894) (Enterobacter sakazakii), this protein is Ion-translocating oxidoreductase complex subunit E.